We begin with the raw amino-acid sequence, 201 residues long: Large ribosomal subunit protein uL4 (201 aa).

Positions 44-66 are disordered; sequence KAQKTRAEVRGGGKKPWRQKGTG. The segment covering 55–66 has biased composition (basic residues); that stretch reads GGKKPWRQKGTG.

The protein belongs to the universal ribosomal protein uL4 family. In terms of assembly, part of the 50S ribosomal subunit.

In terms of biological role, one of the primary rRNA binding proteins, this protein initially binds near the 5'-end of the 23S rRNA. It is important during the early stages of 50S assembly. It makes multiple contacts with different domains of the 23S rRNA in the assembled 50S subunit and ribosome. Its function is as follows. Forms part of the polypeptide exit tunnel. In Alteromonas mediterranea (strain DSM 17117 / CIP 110805 / LMG 28347 / Deep ecotype), this protein is Large ribosomal subunit protein uL4.